A 105-amino-acid chain; its full sequence is Small ribosomal subunit protein uS10c (105 aa).

Belongs to the universal ribosomal protein uS10 family. As to quaternary structure, part of the 30S ribosomal subunit.

The protein resides in the plastid. Its subcellular location is the cyanelle. In terms of biological role, involved in the binding of tRNA to the ribosomes. This chain is Small ribosomal subunit protein uS10c (rps10), found in Cyanophora paradoxa.